A 748-amino-acid chain; its full sequence is Semaphorin-3B (748 aa).

Positions 1–25 are cleaved as a signal peptide; it reads MGRAEAAAMIPGLALLWVAGLGDTA. The region spanning 30-512 is the Sema domain; the sequence is RLRLSFQELQ…SRSAVAQIAL (483 aa). N-linked (GlcNAc...) asparagine glycosylation is present at N82. The cysteines at positions 102 and 113 are disulfide-linked. Residue N124 is glycosylated (N-linked (GlcNAc...) asparagine). 5 disulfides stabilise this stretch: C131–C140, C268–C379, C292–C339, C515–C533, and C643–C709. The 99-residue stretch at 561–659 folds into the Ig-like C2-type domain; that stretch reads PSTLCSGDSS…FSQPLRRLVL (99 aa). The segment at 708–748 is disordered; it reads MCRPQPGHHSVAADSRRKGRNRRMHVSELRAERGPRSAAHW. A compositionally biased stretch (basic and acidic residues) spans 732–742; the sequence is HVSELRAERGP.

It belongs to the semaphorin family.

The protein resides in the secreted. Its function is as follows. Inhibits axonal extension by providing local signals to specify territories inaccessible for growing axons. The protein is Semaphorin-3B (Sema3b) of Mus musculus (Mouse).